Consider the following 296-residue polypeptide: Protease HtpX homolog (296 aa).

The next 2 helical transmembrane spans lie at 7-27 (TVLL…LVAG) and 29-49 (QGMI…YFFS). H131 serves as a coordination point for Zn(2+). The active site involves E132. H135 is a Zn(2+) binding site. The next 2 membrane-spanning stretches (helical) occupy residues 141-161 (ILIS…ANMA) and 178-198 (IASI…ATLI). E207 is a Zn(2+) binding site.

The protein belongs to the peptidase M48B family. Requires Zn(2+) as cofactor.

It is found in the cell inner membrane. This chain is Protease HtpX homolog, found in Sulfurihydrogenibium sp. (strain YO3AOP1).